A 380-amino-acid chain; its full sequence is Phospho-N-acetylmuramoyl-pentapeptide-transferase (380 aa).

Transmembrane regions (helical) follow at residues 25–45 (RAAAAFVTALLVSFILGPAII), 70–90 (TTPTMGGLIILAATFAPVLLW), 98–118 (VLLAMAVTAWMGVIGFLDDYL), 142–162 (VLCGLGLGAYLLLSPISTLPG), 173–193 (VLVVPAVAWAAWLYIPWVTFI), 209–229 (GLSSGLVAIAVLTLGLFAYVL), 245–265 (GAGELTVFCAAVVGACIGFLW), 272–294 (QVFMGDTGSLALGGAVGAIAILL), and 357–377 (QVVVRFWIIGILCAILALSTL).

Belongs to the glycosyltransferase 4 family. MraY subfamily. Requires Mg(2+) as cofactor.

Its subcellular location is the cell inner membrane. The catalysed reaction is UDP-N-acetyl-alpha-D-muramoyl-L-alanyl-gamma-D-glutamyl-meso-2,6-diaminopimeloyl-D-alanyl-D-alanine + di-trans,octa-cis-undecaprenyl phosphate = di-trans,octa-cis-undecaprenyl diphospho-N-acetyl-alpha-D-muramoyl-L-alanyl-D-glutamyl-meso-2,6-diaminopimeloyl-D-alanyl-D-alanine + UMP. It functions in the pathway cell wall biogenesis; peptidoglycan biosynthesis. Functionally, catalyzes the initial step of the lipid cycle reactions in the biosynthesis of the cell wall peptidoglycan: transfers peptidoglycan precursor phospho-MurNAc-pentapeptide from UDP-MurNAc-pentapeptide onto the lipid carrier undecaprenyl phosphate, yielding undecaprenyl-pyrophosphoryl-MurNAc-pentapeptide, known as lipid I. This is Phospho-N-acetylmuramoyl-pentapeptide-transferase from Gemmatimonas aurantiaca (strain DSM 14586 / JCM 11422 / NBRC 100505 / T-27).